The following is a 180-amino-acid chain: MAARLKERYDKQLRAELMKELGFANPMQAPRLEKIVVNMGLGEAINNGKIIDASVEQLAAITGQKPVVTRARKSIANFKLRQGQSIGAMVTLRGDRMYEFFDRLVSIALPRVRDFKGVSPKAFDGKGNYTLGVREQIIFPEINYDKVEKIKGLNITVVTTARNDEEGRALLRHLGMPFRQ.

It belongs to the universal ribosomal protein uL5 family. As to quaternary structure, part of the 50S ribosomal subunit; part of the 5S rRNA/L5/L18/L25 subcomplex. Contacts the 5S rRNA and the P site tRNA. Forms a bridge to the 30S subunit in the 70S ribosome.

This is one of the proteins that bind and probably mediate the attachment of the 5S RNA into the large ribosomal subunit, where it forms part of the central protuberance. In the 70S ribosome it contacts protein S13 of the 30S subunit (bridge B1b), connecting the 2 subunits; this bridge is implicated in subunit movement. Contacts the P site tRNA; the 5S rRNA and some of its associated proteins might help stabilize positioning of ribosome-bound tRNAs. The chain is Large ribosomal subunit protein uL5 from Anaeromyxobacter dehalogenans (strain 2CP-1 / ATCC BAA-258).